A 260-amino-acid polypeptide reads, in one-letter code: Exosome complex component Rrp42 (260 aa).

This sequence belongs to the RNase PH family. Rrp42 subfamily. As to quaternary structure, component of the archaeal exosome complex. Forms a hexameric ring-like arrangement composed of 3 Rrp41-Rrp42 heterodimers. The hexameric ring associates with a trimer of Rrp4 and/or Csl4 subunits.

The protein localises to the cytoplasm. Functionally, non-catalytic component of the exosome, which is a complex involved in RNA degradation. Contributes to the structuring of the Rrp41 active site. In Thermoplasma volcanium (strain ATCC 51530 / DSM 4299 / JCM 9571 / NBRC 15438 / GSS1), this protein is Exosome complex component Rrp42.